A 1441-amino-acid chain; its full sequence is Actin cytoskeleton-regulatory complex protein PAN1 (1441 aa).

Residues 1 to 23 (MYSNPNSFLGGNSQRPGQPQYGN) show a composition bias toward polar residues. Positions 1–150 (MYSNPNSFLG…PPMKPQPTGF (150 aa)) are disordered. Residues 24 to 38 (QFGAGAGQPQLQQPG) show a composition bias toward low complexity. Composition is skewed to polar residues over residues 46 to 58 (GFGQ…QQYT) and 66 to 87 (PQPT…QQNV). The segment covering 97 to 137 (MPQQFQQQFQQQQQQFQQQPQQTSSPFGAAPSQQPPASALA) has biased composition (low complexity). Residues 188 to 277 (DQAKFETLFK…ENIKNEVSSM (90 aa)) form the EH 1 domain. Positions 221-256 (LDGDSLSHIWTLADTTRSGQLHFPEFALAMYLCNLK) constitute an EF-hand 1 domain. The span at 292–303 (ASDSGIRQNTAT) shows a compositional bias: polar residues. Residues 292–316 (ASDSGIRQNTATPPVIQHPQPQPSN) are disordered. An EH 2 domain is found at 440–529 (EKTRYDSLFR…PELVPPSTRN (90 aa)). The EF-hand 2 domain maps to 473–508 (LEKPDLERVWTLADNGNKGRLDMDEFAVAMHLIYRK). Residues 594-622 (GYRSSARRRVGNNSPRPESPASVNSSEEL) are disordered. Residues 604-621 (GNNSPRPESPASVNSSEE) show a composition bias toward polar residues. 2 coiled-coil regions span residues 618–735 (SSEE…LRDA) and 791–820 (KRLE…SVRE). Disordered regions lie at residues 824 to 845 (GIED…KRRW) and 867 to 1441 (RAAR…RVLD). A compositionally biased stretch (low complexity) spans 891–911 (APPSARSVSPAVSRTSTPSAP). Coiled coils occupy residues 956–997 (ETAA…ETGA) and 1028–1143 (RRAE…DVED). The span at 961-993 (RMERERAERAAKLRQAEEEDARREAERQARIAE) shows a compositional bias: basic and acidic residues. A compositionally biased stretch (low complexity) spans 994–1008 (ETGAPAPAAQAAVPK). Basic and acidic residues-rich tracts occupy residues 1023-1098 (PKVD…EEEK) and 1107-1137 (EAKE…KQLE). Acidic residues predominate over residues 1139 to 1152 (LDVEDSSSDDDEGP). Polar residues predominate over residues 1155 to 1166 (ITPQASTPTLGG). Composition is skewed to pro residues over residues 1177-1189 (PAPP…PVQS) and 1219-1236 (PAPP…PPQP). Residues 1262–1272 (KRPEDDGWGSD) are compositionally biased toward basic and acidic residues. Over residues 1273–1282 (KEDDDEDSDD) the composition is skewed to acidic residues. Residues 1313–1324 (SAAASPPVTSPV) show a composition bias toward low complexity. Residues 1340–1402 (PPAPPPPPPM…PPPGGAPAPA (63 aa)) show a composition bias toward pro residues.

It belongs to the PAN1 family. Component of the PAN1 actin cytoskeleton-regulatory complex.

The protein resides in the cell membrane. It is found in the endosome membrane. The protein localises to the cytoplasm. It localises to the cytoskeleton. Its subcellular location is the actin patch. In terms of biological role, component of the PAN1 actin cytoskeleton-regulatory complex required for the internalization of endosomes during actin-coupled endocytosis. The complex links the site of endocytosis to the cell membrane-associated actin cytoskeleton. Mediates uptake of external molecules and vacuolar degradation of plasma membrane proteins. Plays a role in the proper organization of the cell membrane-associated actin cytoskeleton and promotes its destabilization. The protein is Actin cytoskeleton-regulatory complex protein PAN1 (PAN1) of Podospora anserina (strain S / ATCC MYA-4624 / DSM 980 / FGSC 10383) (Pleurage anserina).